A 37-amino-acid polypeptide reads, in one-letter code: Chitinase-like protein (37 aa).

Residues 1 to 20 are disordered; that stretch reads VLLSVGGDADTESPEKKNLG. The GH18 domain occupies 1–37; the sequence is VLLSVGGDADTESPEKKNLGGVSIVDLSMDDFRGLLT.

Belongs to the glycosyl hydrolase 18 family. IDGF subfamily. In terms of processing, glycosylated.

Its subcellular location is the secreted. Cooperates with insulin-like peptides to stimulate the proliferation, polarization and motility of imaginal disk cells. May act by stabilizing the binding of insulin-like peptides to its receptor through a simultaneous interaction with both molecules to form a multiprotein signaling complex. This is Chitinase-like protein from Heliothis virescens (Tobacco budworm moth).